Consider the following 240-residue polypeptide: DNA repair protein RecO (240 aa).

The protein belongs to the RecO family.

Involved in DNA repair and RecF pathway recombination. This is DNA repair protein RecO from Actinobacillus pleuropneumoniae serotype 7 (strain AP76).